The primary structure comprises 184 residues: ATP-dependent protease subunit HslV (184 aa).

Threonine 12 is an active-site residue. The Na(+) site is built by alanine 166, cysteine 169, and threonine 172.

This sequence belongs to the peptidase T1B family. HslV subfamily. A double ring-shaped homohexamer of HslV is capped on each side by a ring-shaped HslU homohexamer. The assembly of the HslU/HslV complex is dependent on binding of ATP.

The protein resides in the cytoplasm. The catalysed reaction is ATP-dependent cleavage of peptide bonds with broad specificity.. Its activity is regulated as follows. Allosterically activated by HslU binding. Its function is as follows. Protease subunit of a proteasome-like degradation complex believed to be a general protein degrading machinery. This chain is ATP-dependent protease subunit HslV, found in Brucella anthropi (strain ATCC 49188 / DSM 6882 / CCUG 24695 / JCM 21032 / LMG 3331 / NBRC 15819 / NCTC 12168 / Alc 37) (Ochrobactrum anthropi).